The chain runs to 82 residues: Photosystem I iron-sulfur center (82 aa).

4Fe-4S ferredoxin-type domains lie at 2 to 31 (SHTV…MVPW) and 37 to 68 (GQIA…VRVY). Cysteine 11, cysteine 14, cysteine 17, cysteine 21, cysteine 48, cysteine 51, cysteine 54, and cysteine 58 together coordinate [4Fe-4S] cluster.

The eukaryotic PSI reaction center is composed of at least 11 subunits. [4Fe-4S] cluster serves as cofactor.

Its subcellular location is the plastid. It localises to the chloroplast thylakoid membrane. The enzyme catalyses reduced [plastocyanin] + hnu + oxidized [2Fe-2S]-[ferredoxin] = oxidized [plastocyanin] + reduced [2Fe-2S]-[ferredoxin]. Apoprotein for the two 4Fe-4S centers FA and FB of photosystem I (PSI); essential for photochemical activity. FB is the terminal electron acceptor of PSI, donating electrons to ferredoxin. The C-terminus interacts with PsaA/B/D and helps assemble the protein into the PSI complex. Required for binding of PsaD and PsaE to PSI. PSI is a plastocyanin/cytochrome c6-ferredoxin oxidoreductase, converting photonic excitation into a charge separation, which transfers an electron from the donor P700 chlorophyll pair to the spectroscopically characterized acceptors A0, A1, FX, FA and FB in turn. The polypeptide is Photosystem I iron-sulfur center (Trieres chinensis (Marine centric diatom)).